The following is a 621-amino-acid chain: MYGRDPWGGPLEINTADSATDDDRSRNLNDLDRAALSRPLDETQQSWLLGPTEQKKKKYVDLGCIIVSRKIFVWTVGTLVAAALLAGFITLIVKTVPRHHPKTPPPDNYTIALHKALKFFNAQKSGKLPKHNNVSWRGNSGLQDGKGETGSFYKDLVGGYYDAGDAIKFNFPMAYAMTMLSWSVIEYSAKYEAAGELTHVKELIKWGTDYFLKTFNSTADSIDDLVSQVGSGNTDDGNTDPNDHYCWMRPEDMDYKRPVTTCNGGCSDLAAEMAAALASASIVFKDNKEYSKKLVHGAKVVYQFGRTRRGRYSAGTAESSKFYNSSMYWDEFIWGGAWMYYATGNVTYLNLITQPTMAKHAGAFWGGPYYGVFSWDNKLAGAQLLLSRLRLFLSPGYPYEEILRTFHNQTSIVMCSYLPIFNKFNRTNGGLIELNHGAPQPLQYSVNAAFLATLYSDYLDAADTPGWYCGPNFYSTSVLRDFARSQIDYILGKNPRKMSYVVGFGTKYPRHVHHRGASIPKNKVKYNCKGGWKWRDSKKPNPNTIEGAMVAGPDKRDGYRDVRMNYNYTEPTLAGNAGLVAALVALSGEEEATGKIDKNTIFSAVPPLFPTPPPPPAPWKP.

Positions 1 to 26 (MYGRDPWGGPLEINTADSATDDDRSR) are disordered. The Cytoplasmic segment spans residues 1–70 (MYGRDPWGGP…DLGCIIVSRK (70 aa)). A polarized targeting signal 1 (PTS1) region spans residues 48–49 (LL). Positions 59 to 62 (YVDL) are polarized targeting signal 2 (PTS2). The chain crosses the membrane as a helical; Signal-anchor for type II membrane protein span at residues 71–91 (IFVWTVGTLVAAALLAGFITL). The Extracellular segment spans residues 92 to 621 (IVKTVPRHHP…PPPPPAPWKP (530 aa)). N-linked (GlcNAc...) asparagine glycosylation is found at asparagine 108 and asparagine 133. Residue aspartate 165 is the Nucleophile of the active site. N-linked (GlcNAc...) asparagine glycosylation is found at asparagine 216, asparagine 324, asparagine 345, asparagine 408, and asparagine 425. Catalysis depends on residues histidine 513 and aspartate 561. N-linked (GlcNAc...) asparagine glycosylation is present at asparagine 567. Glutamate 570 is an active-site residue.

It belongs to the glycosyl hydrolase 9 (cellulase E) family. In terms of processing, glycosylated. N-glycosylation of KOR in the endoplasmic reticulum followed by N-glycan modifications in the Golgi are essential for catalytic activity. As to expression, highly expressed in roots and stems, at intermediate levels in leaves and flowers, and at lower levels in siliques. Expressed in xylem (at protein level).

The protein localises to the cell membrane. The enzyme catalyses Endohydrolysis of (1-&gt;4)-beta-D-glucosidic linkages in cellulose, lichenin and cereal beta-D-glucans.. Its function is as follows. Required for cellulose microfibril formation. Involved in cell wall assembly during cell elongation and cell plate maturation in cytokinesis. Required for secondary cell wall formation in the developing xylem. May cycle through different intracellular compartments, including plasma membrane. The polypeptide is Endoglucanase 25 (KOR) (Arabidopsis thaliana (Mouse-ear cress)).